Here is a 402-residue protein sequence, read N- to C-terminus: uncharacterized protein (402 aa).

A run of 12 helical transmembrane segments spans residues I23–V43, L52–L72, V90–I110, L121–G141, W158–V178, W180–L200, G228–Y248, A255–F275, L282–L302, W309–F329, L351–F371, and S375–H395.

Belongs to the major facilitator superfamily. YhhS family.

The protein resides in the cell inner membrane. This is an uncharacterized protein from Pseudomonas aeruginosa (strain UCBPP-PA14).